A 286-amino-acid polypeptide reads, in one-letter code: Shikimate dehydrogenase (NADP(+)) (286 aa).

Shikimate contacts are provided by residues serine 20–serine 22 and threonine 65. Lysine 69 serves as the catalytic Proton acceptor. Residue aspartate 81 participates in NADP(+) binding. The shikimate site is built by asparagine 90 and aspartate 105. NADP(+)-binding positions include glycine 128–alanine 132 and threonine 217. Tyrosine 219 lines the shikimate pocket. An NADP(+)-binding site is contributed by glycine 240.

Belongs to the shikimate dehydrogenase family. As to quaternary structure, homodimer.

The catalysed reaction is shikimate + NADP(+) = 3-dehydroshikimate + NADPH + H(+). The protein operates within metabolic intermediate biosynthesis; chorismate biosynthesis; chorismate from D-erythrose 4-phosphate and phosphoenolpyruvate: step 4/7. Its function is as follows. Involved in the biosynthesis of the chorismate, which leads to the biosynthesis of aromatic amino acids. Catalyzes the reversible NADPH linked reduction of 3-dehydroshikimate (DHSA) to yield shikimate (SA). This Syntrophobacter fumaroxidans (strain DSM 10017 / MPOB) protein is Shikimate dehydrogenase (NADP(+)).